A 259-amino-acid chain; its full sequence is Tegument protein UL51 homolog (259 aa).

The S-palmitoyl cysteine; by host moiety is linked to residue C9.

The protein belongs to the herpesviridae UL51 family. Oligomerizes. Interacts with ORF53; this interaction mediates ORF53 incorporation to virions. In terms of processing, phosphorylated. Post-translationally, palmitoylation is necessary for Golgi localization.

It localises to the virion tegument. Its subcellular location is the host cytoplasm. It is found in the host Golgi apparatus. Functionally, plays several roles during the time course of infection, including egress of virus particles from the perinuclear space and secondary envelopment of cytoplasmic capsids that bud into specific trans-Golgi network (TGN)-derived membranes. The polypeptide is Tegument protein UL51 homolog (Varicella-zoster virus (strain Dumas) (HHV-3)).